Consider the following 483-residue polypeptide: Inositol-pentakisphosphate 2-kinase (483 aa).

The EXKPK motif motif lies at 140–144 (EIKPK). The segment at 279–298 (SNRSGEPRKMHLSESKPHCE) is disordered. Over residues 281–297 (RSGEPRKMHLSESKPHC) the composition is skewed to basic and acidic residues.

It belongs to the IPK1 type 2 family. Expressed both maternally and zygotically. Expressed in cleavage-stage embryos. Ubiquitously distributed throughout blastula stages of embryogenesis. At the onset of gastrulation, it is enriched in cells around the blastoderm margin. At shield stage, expression is detected in the deep involuted cells that contribute to mesendoderm. During mid and late gastrula stages, it is strongly expressed in axial mesendoderm. However, it is not present in the nascent tailbud at yolk plug closure (YPC) stage. Expression in axial mesendoderm is reduced at the 2 somite stage (SS). At 6 SS, it is expressed in cells surrounding Kupffer's vesicle, but apparently not within. By 10 SS, it is no longer detected as a specific signal above background.

The protein localises to the cytoplasm. It localises to the nucleus. The catalysed reaction is 1D-myo-inositol 1,3,4,5,6-pentakisphosphate + ATP = 1D-myo-inositol hexakisphosphate + ADP + H(+). Phosphorylates Ins(1,3,4,5,6)P5 at position 2 to form Ins(1,2,3,4,5,6)P6 (InsP6 or phytate). InsP6 is involved in many processes such as mRNA export, non-homologous end-joining, endocytosis and ion channel regulation. InsP6 also acts as a key regulator of left-right asymmetry in embryo, probably by regulating asymmetric Ca(2+) during left-right specification. The protein is Inositol-pentakisphosphate 2-kinase (ippk) of Danio rerio (Zebrafish).